Here is a 38-residue protein sequence, read N- to C-terminus: Tyrosinase inhibitor (38 aa).

Intrachain disulfides connect Cys-11-Cys-25, Cys-18-Cys-29, and Cys-24-Cys-36. Position 32 is a 3',4'-dihydroxyphenylalanine (Tyr-32).

As to quaternary structure, monomer. Contains L-DOPA (3',4'-dihydroxyphenylalanine).

Its subcellular location is the secreted. Potent reversible, competitive inhibitor of tyrosinase (phenol oxidase) in the nanomolar range. This chain is Tyrosinase inhibitor, found in Musca domestica (House fly).